The following is a 122-amino-acid chain: Large ribosomal subunit protein uL14 (122 aa).

Belongs to the universal ribosomal protein uL14 family. In terms of assembly, part of the 50S ribosomal subunit. Forms a cluster with proteins L3 and L19. In the 70S ribosome, L14 and L19 interact and together make contacts with the 16S rRNA in bridges B5 and B8.

Functionally, binds to 23S rRNA. Forms part of two intersubunit bridges in the 70S ribosome. The chain is Large ribosomal subunit protein uL14 from Brachyspira hyodysenteriae (strain ATCC 49526 / WA1).